Here is a 330-residue protein sequence, read N- to C-terminus: Short chain dehydrogenase macD (330 aa).

Positions 57, 86, 113, 204, and 208 each coordinate NADP(+). Catalysis depends on Tyr-204, which acts as the Proton donor. Lys-208 serves as the catalytic Lowers pKa of active site Tyr.

This sequence belongs to the short-chain dehydrogenases/reductases (SDR) family.

The protein operates within secondary metabolite biosynthesis; terpenoid biosynthesis. Short chain dehydrogenase; part of the gene cluster that mediates the biosynthesis of macrophorins, isoprenoid epoxycyclohexenones containing cyclized drimane moieties. The first step of the pathway is the synthesis of 6-methylsalicylic acid (6-MSA) by the polyketide synthase macA. 6-MSA is then converted to m-cresol by the decarboxylase macB. The cytochrome P450 monooxygenase macC then catalyzes the oxidation of m-cresol to toluquinol. Epoxidation of toluquinol is then performed by the short chain dehydrogenase macD, with the help of macE, and a further prenylation by macG leads to 7-deacetoxyyanuthone A. The next step is the hydroxylation of C-22 of 7-deacetoxyyanuthone A by the cytochrome P450 monooxygenase macH to yield 22-deacetylyanuthone A. O-Mevalon transferase macI then attaches mevalon to the hydroxyl group of 22-deacetylyanuthone A to produce yanuthone E. The terpene cyclase macJ catalyzes the cyclization of 22-deacetylyanuthone A to macrophorin A. MacJ is also able to catalyze cyclization of yanuthone E and 7-deacetoxyyanuthone A to their corresponding macrophorins. The macJ products can be further modified by macH and macJ, as well as by the FAD-dependent monooxygenase macF, to produce additional macrophorins, including 4'-oxomacrophorin A, 4'-oxomacrophorin D and 4'-oxomacrophorin E. This chain is Short chain dehydrogenase macD, found in Penicillium terrestre.